The chain runs to 806 residues: Leucine--tRNA ligase (806 aa).

Positions 40–51 match the 'HIGH' region motif; the sequence is PYPSGSGLHVGH. Residues 576–580 carry the 'KMSKS' region motif; it reads KMSKS. Residue Lys-579 coordinates ATP.

Belongs to the class-I aminoacyl-tRNA synthetase family.

It localises to the cytoplasm. It carries out the reaction tRNA(Leu) + L-leucine + ATP = L-leucyl-tRNA(Leu) + AMP + diphosphate. In Chlorobium phaeobacteroides (strain BS1), this protein is Leucine--tRNA ligase.